The following is a 332-amino-acid chain: uncharacterized protein (332 aa).

Positions 1–23 (MKRIPSLIIGLLLILATWHSVLA) are cleaved as a signal peptide. A helical membrane pass occupies residues 231-251 (SFFLGMIVTLIILAPVILYLW).

It localises to the membrane. This is an uncharacterized protein from Pyrococcus horikoshii (strain ATCC 700860 / DSM 12428 / JCM 9974 / NBRC 100139 / OT-3).